The sequence spans 198 residues: Recombination protein RecR (198 aa).

The segment at 57 to 72 (CPVCFNITDAERCDVC) adopts a C4-type zinc-finger fold. Positions 80-173 (NLICVVEEPG…VVSRIAYGLP (94 aa)) constitute a Toprim domain.

The protein belongs to the RecR family.

May play a role in DNA repair. It seems to be involved in an RecBC-independent recombinational process of DNA repair. It may act with RecF and RecO. The chain is Recombination protein RecR from Deinococcus deserti (strain DSM 17065 / CIP 109153 / LMG 22923 / VCD115).